A 324-amino-acid chain; its full sequence is tRNA N6-adenosine threonylcarbamoyltransferase (324 aa).

Positions 107, 111, and 127 each coordinate Fe cation. Substrate is bound by residues 127-131 (YVSGG), aspartate 159, glycine 172, glutamate 176, and asparagine 257. Aspartate 285 contacts Fe cation.

Belongs to the KAE1 / TsaD family. In terms of assembly, monomer. Component of the KEOPS complex that consists of Kae1, Bud32, Cgi121 and Pcc1; the whole complex dimerizes. Requires Fe(2+) as cofactor.

It localises to the cytoplasm. It catalyses the reaction L-threonylcarbamoyladenylate + adenosine(37) in tRNA = N(6)-L-threonylcarbamoyladenosine(37) in tRNA + AMP + H(+). In terms of biological role, required for the formation of a threonylcarbamoyl group on adenosine at position 37 (t(6)A37) in tRNAs that read codons beginning with adenine. Is a component of the KEOPS complex that is probably involved in the transfer of the threonylcarbamoyl moiety of threonylcarbamoyl-AMP (TC-AMP) to the N6 group of A37. Kae1 likely plays a direct catalytic role in this reaction, but requires other protein(s) of the complex to fulfill this activity. In vitro, binds tRNA, ssRNA, both single- and double-stranded DNA, and exhibits a low ATPase activity. The protein is tRNA N6-adenosine threonylcarbamoyltransferase of Pyrococcus abyssi (strain GE5 / Orsay).